The primary structure comprises 146 residues: 3-dehydroquinate dehydratase (146 aa).

Residue Y24 is the Proton acceptor of the active site. Residues N75, H81, and D88 each contribute to the substrate site. H101 functions as the Proton donor in the catalytic mechanism. Residues 102–103 (LS) and R112 contribute to the substrate site.

It belongs to the type-II 3-dehydroquinase family. As to quaternary structure, homododecamer.

The catalysed reaction is 3-dehydroquinate = 3-dehydroshikimate + H2O. It functions in the pathway metabolic intermediate biosynthesis; chorismate biosynthesis; chorismate from D-erythrose 4-phosphate and phosphoenolpyruvate: step 3/7. Functionally, catalyzes a trans-dehydration via an enolate intermediate. This is 3-dehydroquinate dehydratase from Maricaulis maris (strain MCS10) (Caulobacter maris).